The following is a 428-amino-acid chain: Enolase (428 aa).

Gln163 is a (2R)-2-phosphoglycerate binding site. The active-site Proton donor is Glu205. Mg(2+) contacts are provided by Asp242, Glu285, and Asp312. (2R)-2-phosphoglycerate is bound by residues Lys337, Arg366, Ser367, and Lys388. The active-site Proton acceptor is the Lys337.

It belongs to the enolase family. It depends on Mg(2+) as a cofactor.

It localises to the cytoplasm. The protein localises to the secreted. The protein resides in the cell surface. The catalysed reaction is (2R)-2-phosphoglycerate = phosphoenolpyruvate + H2O. Its pathway is carbohydrate degradation; glycolysis; pyruvate from D-glyceraldehyde 3-phosphate: step 4/5. In terms of biological role, catalyzes the reversible conversion of 2-phosphoglycerate (2-PG) into phosphoenolpyruvate (PEP). It is essential for the degradation of carbohydrates via glycolysis. The polypeptide is Enolase (Neisseria meningitidis serogroup A / serotype 4A (strain DSM 15465 / Z2491)).